The following is a 1758-amino-acid chain: Y' element ATP-dependent helicase YJL225C (1758 aa).

The Helicase ATP-binding domain occupies 668–845; that stretch reads EIYMADTPSV…LQRIGLTGLA (178 aa). Residue 681 to 688 coordinates ATP; the sequence is APPGYGKT. Positions 900-1051 constitute a Helicase C-terminal domain; that stretch reads ALKLLLALFE…EFYGLESKKG (152 aa). A compositionally biased stretch (low complexity) spans 1142–1360; it reads NVRTNATTNA…ATTTESTNAS (219 aa). The tract at residues 1142 to 1384 is disordered; the sequence is NVRTNATTNA…RFHPVTDINK (243 aa). A compositionally biased stretch (basic and acidic residues) spans 1361–1384; sequence AKEDANKDGNAEDNRFHPVTDINK.

It belongs to the helicase family. Yeast subtelomeric Y' repeat subfamily.

In terms of biological role, catalyzes DNA unwinding and is involved in telomerase-independent telomere maintenance. This chain is Y' element ATP-dependent helicase YJL225C, found in Saccharomyces cerevisiae (strain ATCC 204508 / S288c) (Baker's yeast).